Consider the following 257-residue polypeptide: Phycoerythrobilin:ferredoxin oxidoreductase (257 aa).

This sequence belongs to the HY2 family.

The catalysed reaction is (3Z)-phycoerythrobilin + oxidized 2[4Fe-4S]-[ferredoxin] = 15,16-dihydrobiliverdin + reduced 2[4Fe-4S]-[ferredoxin] + 2 H(+). Catalyzes the two-electron reduction of the C2 and C3(1) diene system of 15,16-dihydrobiliverdin. This is Phycoerythrobilin:ferredoxin oxidoreductase from Synechococcus sp. (strain CC9311).